We begin with the raw amino-acid sequence, 365 residues long: Phospho-N-acetylmuramoyl-pentapeptide-transferase (365 aa).

A run of 10 helical transmembrane segments spans residues 22–42 (YISV…LALG), 74–94 (TMGG…WGNL), 95–115 (TSIY…IGFF), 134–154 (KFAL…YLLS), 168–188 (SLYI…IING), 201–221 (GLAI…AYIE), 240–260 (LAEV…FLWF), 267–287 (VFMG…IAVM), 292–312 (LIFF…MLQV), and 342–362 (KVVI…FAAI).

This sequence belongs to the glycosyltransferase 4 family. MraY subfamily. Mg(2+) is required as a cofactor.

The protein localises to the cell inner membrane. The enzyme catalyses UDP-N-acetyl-alpha-D-muramoyl-L-alanyl-gamma-D-glutamyl-meso-2,6-diaminopimeloyl-D-alanyl-D-alanine + di-trans,octa-cis-undecaprenyl phosphate = di-trans,octa-cis-undecaprenyl diphospho-N-acetyl-alpha-D-muramoyl-L-alanyl-D-glutamyl-meso-2,6-diaminopimeloyl-D-alanyl-D-alanine + UMP. It functions in the pathway cell wall biogenesis; peptidoglycan biosynthesis. Functionally, catalyzes the initial step of the lipid cycle reactions in the biosynthesis of the cell wall peptidoglycan: transfers peptidoglycan precursor phospho-MurNAc-pentapeptide from UDP-MurNAc-pentapeptide onto the lipid carrier undecaprenyl phosphate, yielding undecaprenyl-pyrophosphoryl-MurNAc-pentapeptide, known as lipid I. This is Phospho-N-acetylmuramoyl-pentapeptide-transferase from Francisella tularensis subsp. holarctica (strain OSU18).